The primary structure comprises 79 residues: uncharacterized protein (79 aa).

This is an uncharacterized protein from Escherichia coli (strain K12).